We begin with the raw amino-acid sequence, 349 residues long: Phosphoribosylformylglycinamidine cyclo-ligase (349 aa).

Belongs to the AIR synthase family.

Its subcellular location is the cytoplasm. The catalysed reaction is 2-formamido-N(1)-(5-O-phospho-beta-D-ribosyl)acetamidine + ATP = 5-amino-1-(5-phospho-beta-D-ribosyl)imidazole + ADP + phosphate + H(+). It participates in purine metabolism; IMP biosynthesis via de novo pathway; 5-amino-1-(5-phospho-D-ribosyl)imidazole from N(2)-formyl-N(1)-(5-phospho-D-ribosyl)glycinamide: step 2/2. The sequence is that of Phosphoribosylformylglycinamidine cyclo-ligase from Bordetella parapertussis (strain 12822 / ATCC BAA-587 / NCTC 13253).